A 161-amino-acid chain; its full sequence is Thy-1 membrane glycoprotein (161 aa).

A signal peptide spans 1–19 (MNPVISITLLLSVLQMSRG). At glutamine 20 the chain carries Pyrrolidone carboxylic acid. The Ig-like V-type domain occupies 20-126 (QRVISLTACL…NKTINVIRDK (107 aa)). 2 cysteine pairs are disulfide-bonded: cysteine 28–cysteine 130 and cysteine 38–cysteine 104. An N-linked (GlcNAc...) (complex) asparagine; alternate glycan is attached at asparagine 42. Asparagine 42 is a glycosylation site (N-linked (GlcNAc...) (high mannose) asparagine; alternate). An N-linked (GlcNAc...) asparagine; alternate glycan is attached at asparagine 42. Serine 82 carries the post-translational modification Phosphoserine. Asparagine 93 carries an N-linked (GlcNAc...) (complex) asparagine; alternate glycan. N-linked (GlcNAc...) asparagine; alternate glycosylation is present at asparagine 93. Asparagine 117 carries an N-linked (GlcNAc...) (high mannose) asparagine; in brain; alternate glycan. A glycan (N-linked (GlcNAc...) (hybrid) asparagine; in brain; alternate) is linked at asparagine 117. Residue cysteine 130 is the site of GPI-anchor amidated cysteine attachment. A propeptide spans 131–161 (GGISLLVQNTSWLLLLLLSLSFLQATDFISL) (removed in mature form).

Post-translationally, glycosylation is tissue specific. Sialylation of N-glycans at Asn-93 in brain and at Asn-42, Asn-93 and Asn-117 in thymus. In terms of tissue distribution, abundant in lymphoid tissues.

It localises to the cell membrane. Functionally, may play a role in cell-cell or cell-ligand interactions during synaptogenesis and other events in the brain. This chain is Thy-1 membrane glycoprotein (Thy1), found in Rattus norvegicus (Rat).